The following is a 32-amino-acid chain: Ovostatin (32 aa).

The isoglutamyl cysteine thioester (Cys-Gln) cross-link spans 27-30 (CGEQ).

It belongs to the protease inhibitor I39 (alpha-2-macroglobulin) family. As to quaternary structure, homotetramer, which consists of two pairs of disulfide-linked chains.

It is found in the secreted. Is able to inhibit all four classes of proteinases by a unique 'trapping' mechanism. This protein has a peptide stretch, called the 'bait region' which contains specific cleavage sites for different proteinases. When a proteinase cleaves the bait region, a conformational change is induced in the protein which traps the proteinase. The entrapped enzyme remains active against low molecular weight substrates (activity against high molecular weight substrates is greatly reduced). Following cleavage in the bait region a thioester bond is hydrolyzed and mediates the covalent binding of the protein to the proteinase. The sequence is that of Ovostatin from Anas platyrhynchos (Mallard).